Reading from the N-terminus, the 428-residue chain is D-amino acid dehydrogenase (428 aa).

An FAD-binding site is contributed by 3–17 (VVVLGSGVVGVASAY).

The protein belongs to the DadA oxidoreductase family. The cofactor is FAD.

It catalyses the reaction a D-alpha-amino acid + A + H2O = a 2-oxocarboxylate + AH2 + NH4(+). It participates in amino-acid degradation; D-alanine degradation; NH(3) and pyruvate from D-alanine: step 1/1. Its function is as follows. Oxidative deamination of D-amino acids. This chain is D-amino acid dehydrogenase, found in Burkholderia ambifaria (strain MC40-6).